The chain runs to 420 residues: Gamma-glutamyl phosphate reductase (420 aa).

It belongs to the gamma-glutamyl phosphate reductase family.

The protein resides in the cytoplasm. The enzyme catalyses L-glutamate 5-semialdehyde + phosphate + NADP(+) = L-glutamyl 5-phosphate + NADPH + H(+). It participates in amino-acid biosynthesis; L-proline biosynthesis; L-glutamate 5-semialdehyde from L-glutamate: step 2/2. Catalyzes the NADPH-dependent reduction of L-glutamate 5-phosphate into L-glutamate 5-semialdehyde and phosphate. The product spontaneously undergoes cyclization to form 1-pyrroline-5-carboxylate. The sequence is that of Gamma-glutamyl phosphate reductase from Alkalilimnicola ehrlichii (strain ATCC BAA-1101 / DSM 17681 / MLHE-1).